Here is a 614-residue protein sequence, read N- to C-terminus: BPI fold-containing family B member 4 (614 aa).

The signal sequence occupies residues 1–18 (MWMAWCVAALSVVAVCGT). N-linked (GlcNAc...) asparagine glycosylation occurs at Asn-273. Cysteines 295 and 332 form a disulfide.

The protein belongs to the BPI/LBP/Plunc superfamily. BPI/LBP family. As to expression, expressed in nasal tissue.

The protein resides in the secreted. It localises to the cytoplasm. Functionally, may have the capacity to recognize and bind specific classes of odorants. May act as a carrier molecule, transporting odorants across the mucus layer to access receptor sites. May serve as a primary defense mechanism by recognizing and removing potentially harmful odorants or pathogenic microorganisms from the mucosa or clearing excess odorant from mucus to enable new odorant stimuli to be received. The protein is BPI fold-containing family B member 4 (BPIFB4) of Homo sapiens (Human).